Reading from the N-terminus, the 510-residue chain is Portal protein (510 aa).

The protein belongs to the podoviridae head-to-tail connector protein family. In terms of assembly, homododecamer.

It is found in the virion. Functionally, forms the portal vertex of the capsid. This portal plays critical roles in head assembly, genome packaging, neck/tail attachment, and genome ejection. The portal protein multimerizes as a single ring-shaped homododecamer arranged around a central channel. This is Portal protein from Pseudomonas phage phiKMV.